The following is a 586-amino-acid chain: Capsid scaffolding protein (586 aa).

Active-site charge relay system residues include His53, Ser123, and His142. Positions 251 to 263 (SEETPENAIKDRS) are enriched in basic and acidic residues. Disordered stretches follow at residues 251 to 288 (SEET…HVPA), 330 to 364 (ARRD…DIWP), 458 to 486 (NKRD…YFPG), and 530 to 586 (SASN…MMAD). Positions 264 to 284 (VSTQTAPSFDISESQQPSGQT) are enriched in polar residues. The interval 312–331 (EDMVYVPFEKYASLLAASAR) is interaction with pAP. 2 interaction with major capsid protein regions span residues 566-586 (DAQT…MMAD) and 567-586 (AQTK…MMAD).

This sequence belongs to the herpesviridae capsid scaffolding protein family. In terms of assembly, homomultimer. Interacts with major capsid protein. As to quaternary structure, exists in a monomer-dimer equilibrium with the dimer being the active species. In terms of processing, capsid scaffolding protein is cleaved by assemblin after formation of the spherical procapsid. As a result, the capsid obtains its mature, icosahedral shape. Cleavages occur at two or more sites: release (R-site) and maturation (M-site).

The protein localises to the host cytoplasm. Its subcellular location is the host nucleus. It carries out the reaction Cleaves -Ala-|-Ser- and -Ala-|-Ala- bonds in the scaffold protein.. In terms of biological role, acts as a scaffold protein by binding major capsid protein in the cytoplasm, inducing the nuclear localization of both proteins. Multimerizes in the nucleus such as major capsid protein forms the icosahedral T=16 capsid. Autocatalytic cleavage releases the assembly protein, and subsequently abolishes interaction with major capsid protein. Cleavages products are evicted from the capsid before or during DNA packaging. Functionally, protease that plays an essential role in virion assembly within the nucleus. Catalyzes the cleavage of the assembly protein after formation of the spherical procapsid. By that cleavage, the capsid matures and gains its icosahedral shape. The cleavage sites seem to include -Ala-Ser-, -Ala-Ala-, as well as Ala-Thr bonds. Assemblin and cleavages products are evicted from the capsid before or during DNA packaging. Plays a major role in capsid assembly. Acts as a scaffold protein by binding major capsid protein. Multimerizes in the nucleus such as major capsid protein forms the icosahedral T=16 capsid. Cleaved by assemblin after capsid completion. The cleavages products are evicted from the capsid before or during DNA packaging. This chain is Capsid scaffolding protein, found in Gallus gallus (Chicken).